Reading from the N-terminus, the 668-residue chain is MTLYDENNLHIIKDNLRYLKLLSKQYPSISSASSEIINLQAILNLPKGTEHFISDVHGEYESFTHMLKNASGVIKRKIDDVFGTSLRECDKKNLATLIYYPEQKLDLIKKSEKNLEDWYKITLYRLIRLCQIVSSKYTRSKVRKSLPSDFAYIIEELLNEQGDRVDKQEYYNSIIETIIDIDRASEFIIAISNVIQRLVVDKLHIIGDIYDRGPGAEIIIEALSKHHSIDIQWGNHDIVWMGAAAGCEACIANVIRISLRYANLSTLEDGYGINLLPLATFAMDFYKEDNCENFKPRTIDKNLNETDIKLLSKMHKAISIIQFKLEGKIIKRRPEFKMEERLLLDKINIKEGTLNLNEKIYKLIDTNFPTLDKENPYELNERERDLVEKLTNSFINSEKLQRHIKFLYSNGSLYLKYNSNLLYHGCIPLNEDGSLKEVTLCKETLKGKSLLDKLDRLAREAYFFKKDPESKLYGMDMMWYLWCGPNSPLFGKKKMTTFERYFLDDKNTHKEQKNPYYKYRNDEKMCTMIFEEFELDADNSHIINGHIPVKTKEGENPIKANGKLLVIDGGFCKAYQPQTGIAGYTLIYNSYGLLLTSHEPFSSIHKAIVEGNDILSSTTILEHVSSRKRVLDTDSGEEIKKQIHDLEMLLVAYRKGLIKEENEANIRF.

It belongs to the FBPase class 3 family. Mn(2+) is required as a cofactor.

It catalyses the reaction beta-D-fructose 1,6-bisphosphate + H2O = beta-D-fructose 6-phosphate + phosphate. It participates in carbohydrate biosynthesis; gluconeogenesis. The chain is Fructose-1,6-bisphosphatase class 3 from Clostridium botulinum (strain Kyoto / Type A2).